The sequence spans 388 residues: MIKNPKVLILTAHYGNGHVQVAKTLEQTFRQKGIEDVIVCDLFGESHPFITDITKYLYLKSYTIGKELYRLFYYGVEKIYDKKIASWYANFGRKRLKTLLQVEKPDIVINTFPIIAVPELKKQTGISIPVYNVLTDFCVHKIWIHREVDRYFVATDHVKELMVDIGVPAEQIVETGIPIRSSFELKVNPDIIYNKYQLCKNKKILLIVAGAHGVLGNVKELCQSFMSVPNLQVVVVCGKNEALKQDLLSLQNQNSDALKVFGYVENIDELFRVTSCMITKPGGITLSEAAALQVPVILYKPVPGQENENAMYFEKKGAAVVIRDDSEVFAKTEALLQDDVKLLQMKEAMKSIYLPEPAGHIVDAILAENHAEPRHIPIKSPALAQSFT.

This sequence belongs to the glycosyltransferase 28 family. UgtP subfamily.

The protein resides in the cell membrane. The catalysed reaction is a 1,2-diacyl-3-O-(beta-D-glucopyranosyl)-sn-glycerol + UDP-alpha-D-glucose = a 1,2-diacyl-3-O-(beta-D-Glc-(1-&gt;6)-beta-D-Glc)-sn-glycerol + UDP + H(+). It catalyses the reaction a 1,2-diacyl-3-O-(beta-D-Glc-(1-&gt;6)-beta-D-Glc)-sn-glycerol + UDP-alpha-D-glucose = a 1,2-diacyl-3-O-(beta-D-Glc-(1-&gt;6)-beta-D-Glc-(1-&gt;6)-beta-D-Glc)-sn-glycerol + UDP + H(+). It carries out the reaction a 1,2-diacyl-sn-glycerol + UDP-alpha-D-glucose = a 1,2-diacyl-3-O-(beta-D-glucopyranosyl)-sn-glycerol + UDP + H(+). It functions in the pathway glycolipid metabolism; diglucosyl-diacylglycerol biosynthesis. Functionally, processive glucosyltransferase involved in the biosynthesis of both the bilayer- and non-bilayer-forming membrane glucolipids. Is able to successively transfer up to three glucosyl residues to diacylglycerol (DAG), thereby catalyzing the formation of beta-monoglucosyl-DAG (3-O-(beta-D-glucopyranosyl)-1,2-diacyl-sn-glycerol), beta-diglucosyl-DAG (3-O-(beta-D-glucopyranosyl-beta-(1-&gt;6)-D-glucopyranosyl)-1,2-diacyl-sn-glycerol) and beta-triglucosyl-DAG (3-O-(beta-D-glucopyranosyl-beta-(1-&gt;6)-D-glucopyranosyl-beta-(1-&gt;6)-D-glucopyranosyl)-1,2-diacyl-sn-glycerol). Beta-diglucosyl-DAG is the predominant glycolipid found in Bacillales and is also used as a membrane anchor for lipoteichoic acid (LTA). This chain is Processive diacylglycerol beta-glucosyltransferase, found in Bacillus cereus (strain G9842).